Consider the following 191-residue polypeptide: Dephospho-CoA kinase (191 aa).

The DPCK domain occupies 3-191; that stretch reads AIGITGSYAS…NLIANLECRV (189 aa). 11 to 16 is an ATP binding site; the sequence is ASGKTF.

It belongs to the CoaE family.

It is found in the cytoplasm. It catalyses the reaction 3'-dephospho-CoA + ATP = ADP + CoA + H(+). Its pathway is cofactor biosynthesis; coenzyme A biosynthesis; CoA from (R)-pantothenate: step 5/5. Its function is as follows. Catalyzes the phosphorylation of the 3'-hydroxyl group of dephosphocoenzyme A to form coenzyme A. The sequence is that of Dephospho-CoA kinase from Rickettsia bellii (strain RML369-C).